The sequence spans 510 residues: Serine carboxypeptidase 1 (510 aa).

Residues 1–25 (MARRGRRSLASPAVAIALFVFLAYG) form the signal peptide. The propeptide occupies 26–36 (GGGGGGGVCEA). Disulfide bonds link Cys98/Cys399, Cys262/Cys274, and Cys297/Cys366. N-linked (GlcNAc...) asparagine glycosylation occurs at Asn154. The active site involves Ser194. N-linked (GlcNAc...) asparagine glycosylation occurs at Asn268. The propeptide at 303–362 (IKKVTPANTKLPKSFQHLGTTTKPLAVRTRMHGRAWPLRAPVRAGRVPSWQEFARGSRPS) is linker peptide. N-linked (GlcNAc...) asparagine glycosylation occurs at Asn418. Active-site residues include Asp434 and His487. The Microbody targeting signal signature appears at 508-510 (SKL).

It belongs to the peptidase S10 family.

It catalyses the reaction Release of a C-terminal amino acid with broad specificity.. The polypeptide is Serine carboxypeptidase 1 (CBP1) (Oryza sativa subsp. japonica (Rice)).